The primary structure comprises 2571 residues: Stabilin-1 (2571 aa).

Positions 1–25 are cleaved as a signal peptide; that stretch reads MAEPRTLLLLCVLVLCLSDSSFIRG. Over 26–2475 the chain is Extracellular; it reads QTVRSKRCDI…RAVLGSEPPP (2450 aa). EGF-like domains lie at 111 to 149, 157 to 194, 196 to 232, and 233 to 272; these read FECP…SVCQ, FGPD…PHCD, ELPV…NVCL, and APDP…KVCL. Cystine bridges form between Cys113-Cys127, Cys121-Cys137, Cys139-Cys148, Cys161-Cys172, Cys165-Cys182, Cys184-Cys193, Cys200-Cys211, Cys205-Cys218, Cys220-Cys231, Cys237-Cys248, Cys242-Cys258, and Cys260-Cys271. N-linked (GlcNAc...) asparagine glycosylation is found at Asn134 and Asn142. N-linked (GlcNAc...) asparagine glycosylation is found at Asn287, Asn313, Asn416, Asn607, Asn674, Asn713, and Asn746. 2 consecutive FAS1 domains span residues 357–495 and 507–642; these read YGHL…TALR and KKTV…EGIL. The region spanning 729 to 769 is the EGF-like 5 domain; the sequence is DCTQCPGGFSNPCYGKGNCSDGVRGNGACLCFPDYKGIACH. Cystine bridges form between Cys733–Cys747, Cys741–Cys757, and Cys759–Cys768. Asn817 carries an N-linked (GlcNAc...) asparagine glycan. EGF-like domains lie at 819–859, 862–904, 905–947, and 948–987; these read SMGN…NGFS, RSNP…RICV, AIDE…YECS, and PIDP…DGFS. Intrachain disulfides connect Cys823/Cys838, Cys832/Cys847, Cys866/Cys880, Cys874/Cys890, Cys892/Cys903, Cys909/Cys923, Cys917/Cys933, Cys935/Cys946, Cys952/Cys965, and Cys959/Cys975. FAS1 domains lie at 989–1119 and 1129–1254; these read YGDI…SQVL and GPGL…SGIL. Asn1011, Asn1088, Asn1097, Asn1171, Asn1179, Asn1223, and Asn1275 each carry an N-linked (GlcNAc...) asparagine glycan. Residues 1328–1393 form the Laminin EGF-like 1 domain; sequence TLCEPCPGGL…CDCDHGLCQE (66 aa). 18 disulfides stabilise this stretch: Cys1333-Cys1347, Cys1341-Cys1357, Cys1359-Cys1368, Cys1380-Cys1391, Cys1384-Cys1401, Cys1403-Cys1412, Cys1421-Cys1431, Cys1425-Cys1441, Cys1443-Cys1454, Cys1460-Cys1473, Cys1467-Cys1483, Cys1485-Cys1496, Cys1502-Cys1515, Cys1509-Cys1525, Cys1527-Cys1539, Cys1545-Cys1558, Cys1552-Cys1568, and Cys1570-Cys1582. Asn1398 is a glycosylation site (N-linked (GlcNAc...) asparagine). EGF-like domains lie at 1417–1455, 1456–1497, 1498–1540, and 1541–1583; these read TDHQ…SYCS, EVDP…ELCQ, EINS…QTCK, and LLDP…ITCH. N-linked (GlcNAc...) asparagine glycans are attached at residues Asn1450 and Asn1472. 2 consecutive FAS1 domains span residues 1583–1709 and 1725–1865; these read HGRV…DHVL and PQRN…DQLL. N-linked (GlcNAc...) asparagine glycosylation is found at Asn1627 and Asn1728. The Laminin EGF-like 2 domain maps to 1966–2031; that stretch reads INCHACPGGP…RCTQHGRCDE (66 aa). 17 disulfide bridges follow: Cys1971/Cys1985, Cys1979/Cys1995, Cys1997/Cys2006, Cys2018/Cys2029, Cys2023/Cys2039, Cys2041/Cys2050, Cys2060/Cys2070, Cys2064/Cys2076, Cys2078/Cys2089, Cys2095/Cys2108, Cys2102/Cys2117, Cys2119/Cys2130, Cys2136/Cys2150, Cys2144/Cys2160, Cys2162/Cys2173, Cys2230/Cys2299, and Cys2254/Cys2275. EGF-like domains lie at 2056 to 2090, 2091 to 2131, and 2132 to 2174; these read LQPV…RVCT, VADL…WSCR, and ARDP…LQCL. The N-linked (GlcNAc...) asparagine glycan is linked to Asn2107. One can recognise a Link domain in the interval 2208–2301; the sequence is GVFHIQATSG…SELWDAYCYR (94 aa). N-linked (GlcNAc...) asparagine glycosylation is found at Asn2261, Asn2290, Asn2334, Asn2347, Asn2379, Asn2393, Asn2400, and Asn2424. The FAS1 7 domain maps to 2322-2459; that stretch reads NGKLLDVLAA…GIIHALASPL (138 aa). A helical membrane pass occupies residues 2476-2496; sequence VALSLGVVVTSGTLLGLVAGA. At 2497–2571 the chain is on the cytoplasmic side; the sequence is LYLRARGKPP…PDTQRVLKVK (75 aa).

Interacts with CHID1.

It localises to the membrane. Acts as a scavenger receptor for acetylated low density lipoprotein. Binds to both Gram-positive and Gram-negative bacteria and may play a role in defense against bacterial infection. When inhibited in endothelial tube formation assays, there is a marked decrease in cell-cell interactions, suggesting a role in angiogenesis. Involved in the delivery of newly synthesized CHID1/SI-CLP from the biosynthetic compartment to the endosomal/lysosomal system. This is Stabilin-1 (Stab1) from Mus musculus (Mouse).